We begin with the raw amino-acid sequence, 201 residues long: Large ribosomal subunit protein uL4 (201 aa).

Positions 43–66 (TRAQKTRSEVSGGGKKPWRQKGTG) are disordered.

The protein belongs to the universal ribosomal protein uL4 family. As to quaternary structure, part of the 50S ribosomal subunit.

In terms of biological role, one of the primary rRNA binding proteins, this protein initially binds near the 5'-end of the 23S rRNA. It is important during the early stages of 50S assembly. It makes multiple contacts with different domains of the 23S rRNA in the assembled 50S subunit and ribosome. Functionally, forms part of the polypeptide exit tunnel. The protein is Large ribosomal subunit protein uL4 of Tolumonas auensis (strain DSM 9187 / NBRC 110442 / TA 4).